The primary structure comprises 114 residues: Large ribosomal subunit protein uL22 (114 aa).

This sequence belongs to the universal ribosomal protein uL22 family. As to quaternary structure, part of the 50S ribosomal subunit.

In terms of biological role, this protein binds specifically to 23S rRNA; its binding is stimulated by other ribosomal proteins, e.g. L4, L17, and L20. It is important during the early stages of 50S assembly. It makes multiple contacts with different domains of the 23S rRNA in the assembled 50S subunit and ribosome. Functionally, the globular domain of the protein is located near the polypeptide exit tunnel on the outside of the subunit, while an extended beta-hairpin is found that lines the wall of the exit tunnel in the center of the 70S ribosome. This chain is Large ribosomal subunit protein uL22, found in Ehrlichia chaffeensis (strain ATCC CRL-10679 / Arkansas).